The chain runs to 159 residues: Aphid transmission protein (159 aa).

The protein belongs to the caulimoviridae ORF II family.

Its function is as follows. This protein is involved in virus transmission. In Cauliflower mosaic virus (strain PV147) (CaMV), this protein is Aphid transmission protein.